Reading from the N-terminus, the 312-residue chain is Isethionate sulfite-lyase activating enzyme (312 aa).

The Radical SAM core domain maps to 22-309 (HDGPGIRTIV…VDETRGAVTE (288 aa)). Residues cysteine 36, cysteine 40, cysteine 43, cysteine 62, cysteine 65, cysteine 68, cysteine 72, cysteine 92, cysteine 95, cysteine 100, and cysteine 104 each contribute to the [4Fe-4S] cluster site. 42 to 44 (WCS) serves as a coordination point for S-adenosyl-L-methionine. 4Fe-4S ferredoxin-type domains are found at residues 53–82 (PQVA…VNED) and 83–115 (GTLS…YGEN). S-adenosyl-L-methionine contacts are provided by residues glycine 144, 193–195 (DVK), and histidine 267.

The protein belongs to the organic radical-activating enzymes family. In terms of assembly, monomer. [4Fe-4S] cluster is required as a cofactor.

The catalysed reaction is glycyl-[protein] + reduced [flavodoxin] + S-adenosyl-L-methionine = glycin-2-yl radical-[protein] + semiquinone [flavodoxin] + 5'-deoxyadenosine + L-methionine + H(+). It functions in the pathway organosulfur degradation; alkanesulfonate degradation. In terms of biological role, involved in an anaerobic respiration pathway that converts the sulfonate taurine (2-aminoethanesulfonate) to ammonia, acetate and sulfide. Catalyzes activation of the isethionate sulfite-lyase IslA under anaerobic conditions by generation of an organic free radical on a glycine residue, via a homolytic cleavage of S-adenosyl-L-methionine (SAM). The sequence is that of Isethionate sulfite-lyase activating enzyme from Bilophila wadsworthia (strain 3_1_6).